A 124-amino-acid polypeptide reads, in one-letter code: MAAVLTFLRFLGRGGAVTRGLPGGARCFGVRTSPTGEKVTHTGQVYDDGDYRKVRFVGRQKEVNENFAIDLIAEQPVSQVGSRVISCDGGGGALGHPRVYINLDKETKTGTCGYCGLQFRQQHH.

A mitochondrion-targeting transit peptide spans 1–28 (MAAVLTFLRFLGRGGAVTRGLPGGARCF).

The protein belongs to the complex I NDUFS6 subunit family. As to quaternary structure, mammalian complex I is composed of 45 different subunits. This is a component of the iron-sulfur (IP) fragment of the enzyme.

It localises to the mitochondrion inner membrane. In terms of biological role, accessory subunit of the mitochondrial membrane respiratory chain NADH dehydrogenase (Complex I), that is believed not to be involved in catalysis. Complex I functions in the transfer of electrons from NADH to the respiratory chain. The immediate electron acceptor for the enzyme is believed to be ubiquinone. The chain is NADH dehydrogenase [ubiquinone] iron-sulfur protein 6, mitochondrial (NDUFS6) from Bos taurus (Bovine).